A 426-amino-acid polypeptide reads, in one-letter code: Lipid droplet localized protein (426 aa).

Residues 278-298 form a helical membrane-spanning segment; that stretch reads FYGYLIGLWIMFLSIFVKYPF.

The protein belongs to the saccharopine dehydrogenase family.

The protein localises to the membrane. It localises to the lipid droplet. The protein is Lipid droplet localized protein of Caenorhabditis elegans.